We begin with the raw amino-acid sequence, 299 residues long: tRNA dimethylallyltransferase (299 aa).

An ATP-binding site is contributed by 13–20; it reads GPTASGKT. Substrate is bound at residue 15-20; sequence TASGKT. The interaction with substrate tRNA stretch occupies residues 38-41; sequence DSRQ.

This sequence belongs to the IPP transferase family. As to quaternary structure, monomer. The cofactor is Mg(2+).

The catalysed reaction is adenosine(37) in tRNA + dimethylallyl diphosphate = N(6)-dimethylallyladenosine(37) in tRNA + diphosphate. In terms of biological role, catalyzes the transfer of a dimethylallyl group onto the adenine at position 37 in tRNAs that read codons beginning with uridine, leading to the formation of N6-(dimethylallyl)adenosine (i(6)A). This Prochlorococcus marinus (strain NATL2A) protein is tRNA dimethylallyltransferase.